A 181-amino-acid chain; its full sequence is ATP-dependent protease subunit HslV (181 aa).

Thr-7 is a catalytic residue. Na(+)-binding residues include Ala-166, Cys-169, and Thr-172.

It belongs to the peptidase T1B family. HslV subfamily. As to quaternary structure, a double ring-shaped homohexamer of HslV is capped on each side by a ring-shaped HslU homohexamer. The assembly of the HslU/HslV complex is dependent on binding of ATP.

It is found in the cytoplasm. The enzyme catalyses ATP-dependent cleavage of peptide bonds with broad specificity.. With respect to regulation, allosterically activated by HslU binding. Functionally, protease subunit of a proteasome-like degradation complex believed to be a general protein degrading machinery. In Anaeromyxobacter sp. (strain Fw109-5), this protein is ATP-dependent protease subunit HslV.